The following is a 196-amino-acid chain: 3-isopropylmalate dehydratase small subunit (196 aa).

The protein belongs to the LeuD family. LeuD type 1 subfamily. As to quaternary structure, heterodimer of LeuC and LeuD.

It carries out the reaction (2R,3S)-3-isopropylmalate = (2S)-2-isopropylmalate. It participates in amino-acid biosynthesis; L-leucine biosynthesis; L-leucine from 3-methyl-2-oxobutanoate: step 2/4. Its function is as follows. Catalyzes the isomerization between 2-isopropylmalate and 3-isopropylmalate, via the formation of 2-isopropylmaleate. This chain is 3-isopropylmalate dehydratase small subunit, found in Streptococcus sanguinis (strain SK36).